The chain runs to 349 residues: N-acetyltaurine hydrolase (349 aa).

A divalent metal cation contacts are provided by His26, His28, Glu169, His201, His230, and Asp298.

Belongs to the metallo-dependent hydrolases superfamily. Phosphotriesterase family. A divalent metal cation serves as cofactor.

Its subcellular location is the cytoplasm. The protein localises to the cytosol. It catalyses the reaction N-acetyltaurine + H2O = taurine + acetate. It carries out the reaction N-propanoyltaurine + H2O = propanoate + taurine. The enzyme catalyses N-acetyl-L-methionine + H2O = L-methionine + acetate. The catalysed reaction is N-acetyl-L-isoleucine + H2O = L-isoleucine + acetate. It catalyses the reaction N-acetyl-L-leucine + H2O = L-leucine + acetate. It carries out the reaction N-acetyl-L-valine + H2O = L-valine + acetate. Functionally, N-acetyltaurine hydrolase that regulates feeding by catalyzing the hydrolysis of N-acetyltaurine into taurine and acetate. N-acetyltaurine has anorexigenic and anti-obesity effects that are dependent on GFRAL receptor and GDF15. PTER also acts on other N-acetyl amino acids (Met, Ile, Leu, Val) and N-propionyltaurine, but at lower rates. This chain is N-acetyltaurine hydrolase, found in Homo sapiens (Human).